A 448-amino-acid polypeptide reads, in one-letter code: tRNA-2-methylthio-N(6)-dimethylallyladenosine synthase (448 aa).

Residues 2 to 120 enclose the MTTase N-terminal domain; the sequence is KKYRIIVFGC…LPELIGKVIE (119 aa). 6 residues coordinate [4Fe-4S] cluster: Cys-11, Cys-47, Cys-81, Cys-158, Cys-162, and Cys-165. Positions 144–374 constitute a Radical SAM core domain; sequence RKEGVRAWVT…IKLQNKISLE (231 aa). Residues 377–440 form the TRAM domain; the sequence is EEEVGQTQEV…LAHLTGILSY (64 aa).

Belongs to the methylthiotransferase family. MiaB subfamily. In terms of assembly, monomer. Requires [4Fe-4S] cluster as cofactor.

It is found in the cytoplasm. It carries out the reaction N(6)-dimethylallyladenosine(37) in tRNA + (sulfur carrier)-SH + AH2 + 2 S-adenosyl-L-methionine = 2-methylsulfanyl-N(6)-dimethylallyladenosine(37) in tRNA + (sulfur carrier)-H + 5'-deoxyadenosine + L-methionine + A + S-adenosyl-L-homocysteine + 2 H(+). In terms of biological role, catalyzes the methylthiolation of N6-(dimethylallyl)adenosine (i(6)A), leading to the formation of 2-methylthio-N6-(dimethylallyl)adenosine (ms(2)i(6)A) at position 37 in tRNAs that read codons beginning with uridine. This Pelotomaculum thermopropionicum (strain DSM 13744 / JCM 10971 / SI) protein is tRNA-2-methylthio-N(6)-dimethylallyladenosine synthase.